A 272-amino-acid chain; its full sequence is Glutamate racemase (272 aa).

Residues 16–17 and 48–49 each bind substrate; these read DS and YG. Cys-79 (proton donor/acceptor) is an active-site residue. Residue 80-81 coordinates substrate; that stretch reads NT. Cys-191 acts as the Proton donor/acceptor in catalysis. 192–193 contributes to the substrate binding site; it reads TH.

The protein belongs to the aspartate/glutamate racemases family.

The enzyme catalyses L-glutamate = D-glutamate. The protein operates within cell wall biogenesis; peptidoglycan biosynthesis. In terms of biological role, provides the (R)-glutamate required for cell wall biosynthesis. The sequence is that of Glutamate racemase from Chlorobaculum parvum (strain DSM 263 / NCIMB 8327) (Chlorobium vibrioforme subsp. thiosulfatophilum).